A 296-amino-acid polypeptide reads, in one-letter code: tRNA dimethylallyltransferase (296 aa).

9–16 (GPTAVGKT) lines the ATP pocket. 11-16 (TAVGKT) contributes to the substrate binding site. The tract at residues 34–37 (DSRQ) is interaction with substrate tRNA.

It belongs to the IPP transferase family. Monomer. The cofactor is Mg(2+).

It catalyses the reaction adenosine(37) in tRNA + dimethylallyl diphosphate = N(6)-dimethylallyladenosine(37) in tRNA + diphosphate. Functionally, catalyzes the transfer of a dimethylallyl group onto the adenine at position 37 in tRNAs that read codons beginning with uridine, leading to the formation of N6-(dimethylallyl)adenosine (i(6)A). The protein is tRNA dimethylallyltransferase of Chloroflexus aggregans (strain MD-66 / DSM 9485).